Reading from the N-terminus, the 126-residue chain is Cytochrome c2 (126 aa).

Residues Cys-17, Cys-20, His-21, and Met-101 each coordinate heme c.

Belongs to the cytochrome c family. Post-translationally, binds 1 heme c group covalently per subunit.

The protein localises to the periplasm. In terms of biological role, cytochrome c2 is found mainly in purple, non-sulfur, photosynthetic bacteria where it functions as the electron donor to the oxidized bacteriochlorophyll in the photophosphorylation pathway. However, it may also have a role in the respiratory chain and is found in some non-photosynthetic bacteria. This Rhodovulum adriaticum (Rhodopseudomonas adriatica) protein is Cytochrome c2.